We begin with the raw amino-acid sequence, 137 residues long: Probable calcium-binding protein CML33 (137 aa).

4 EF-hand domains span residues 1–36 (MNNM…LSPS), 37–72 (IPSE…TAQS), 76–111 (DVEK…LGEK), and 112–137 (CTVE…FVGV). Ca(2+) is bound by residues D14, S16, D18, K20, and E25. Residues D89, N91, D93, K95, and E100 each contribute to the Ca(2+) site.

Potential calcium sensor. The chain is Probable calcium-binding protein CML33 (CML33) from Arabidopsis thaliana (Mouse-ear cress).